A 365-amino-acid chain; its full sequence is MFEINPVNNRIQDLTERSDVLRGYLDYDAKKERLEEVNAELEQPDVWNEPERAQALGKERSSLEAVVDTLDQMKQGLEDVSGLLELAVEADDEETFNEAVAELDALEEKLAQLEFRRMFSGEYDSADCYLDIQAGSGGTEAQDWASMLERMYLRWAESRGFKTEIIEESEGEVAGIKSVTIKISGDYAYGWLRTETGVHRLVRKSPFDSGGRRHTSFSSAFVYPEVDDDIDIEINPADLRIDVYRASGAGGQHVNRTESAVRITHIPTGIVTQCQNDRSQHKNKDQAMKQMKAKLYELEMQKKNAEKQAMEDNKSDIGWGSQIRSYVLDDSRIKDLRTGVETRNTQAVLDGSLDQFIEASLKAGL.

N5-methylglutamine is present on Gln-252.

It belongs to the prokaryotic/mitochondrial release factor family. In terms of processing, methylated by PrmC. Methylation increases the termination efficiency of RF2.

The protein resides in the cytoplasm. Peptide chain release factor 2 directs the termination of translation in response to the peptide chain termination codons UGA and UAA. This chain is Peptide chain release factor 2, found in Shigella flexneri.